We begin with the raw amino-acid sequence, 171 residues long: uncharacterized protein (171 aa).

Disordered stretches follow at residues 1-50 and 71-91; these read MSHR…THLS and RIDK…PMMK.

This is an uncharacterized protein from Caenorhabditis elegans.